The following is a 260-amino-acid chain: Adenosylcobinamide-GDP ribazoletransferase (260 aa).

7 consecutive transmembrane segments (helical) span residues proline 42–isoleucine 62, leucine 64–leucine 84, phenylalanine 117–isoleucine 137, tyrosine 144–tryptophan 164, glycine 192–isoleucine 212, alanine 214–glycine 234, and threonine 240–leucine 260.

The protein belongs to the CobS family. Requires Mg(2+) as cofactor.

The protein resides in the cell inner membrane. The catalysed reaction is alpha-ribazole + adenosylcob(III)inamide-GDP = adenosylcob(III)alamin + GMP + H(+). The enzyme catalyses alpha-ribazole 5'-phosphate + adenosylcob(III)inamide-GDP = adenosylcob(III)alamin 5'-phosphate + GMP + H(+). It participates in cofactor biosynthesis; adenosylcobalamin biosynthesis; adenosylcobalamin from cob(II)yrinate a,c-diamide: step 7/7. In terms of biological role, joins adenosylcobinamide-GDP and alpha-ribazole to generate adenosylcobalamin (Ado-cobalamin). Also synthesizes adenosylcobalamin 5'-phosphate from adenosylcobinamide-GDP and alpha-ribazole 5'-phosphate. The protein is Adenosylcobinamide-GDP ribazoletransferase of Brucella ovis (strain ATCC 25840 / 63/290 / NCTC 10512).